Reading from the N-terminus, the 91-residue chain is Small ribosomal subunit protein uS19 (91 aa).

The protein belongs to the universal ribosomal protein uS19 family.

Protein S19 forms a complex with S13 that binds strongly to the 16S ribosomal RNA. This Pseudomonas syringae pv. syringae (strain B728a) protein is Small ribosomal subunit protein uS19.